Reading from the N-terminus, the 282-residue chain is Aminoglycoside 6-adenylyltransferase (282 aa).

It catalyses the reaction streptomycin + ATP = 6-O-adenylylstreptomycin + diphosphate. Its function is as follows. Required for streptomycin resistance. Adenylates streptomycin on the O-6 residue. In Staphylococcus aureus, this protein is Aminoglycoside 6-adenylyltransferase.